The sequence spans 166 residues: MNMKTIEDVFIHLLSDTYSAEKQLTRALAKLARATSNEKLSQAFHAHLEETHGQIERIDQVVESESNLKIKRMKCVAMEGLIEEANEVIESTEKNEVRDAALIAAAQKVEHYEIASYGTLATLAEQLGYRKAAKLLKETLEEEKATDIKLTDLAINNVNKKAENKA.

Homodimer.

In Escherichia coli (strain K12), this protein is Protein YciF (yciF).